The following is a 371-amino-acid chain: Ferrochelatase (371 aa).

Fe cation contacts are provided by His-218 and Glu-299.

It belongs to the ferrochelatase family.

It localises to the cytoplasm. The catalysed reaction is heme b + 2 H(+) = protoporphyrin IX + Fe(2+). It functions in the pathway porphyrin-containing compound metabolism; protoheme biosynthesis; protoheme from protoporphyrin-IX: step 1/1. Its function is as follows. Catalyzes the ferrous insertion into protoporphyrin IX. This is Ferrochelatase from Cupriavidus necator (strain ATCC 17699 / DSM 428 / KCTC 22496 / NCIMB 10442 / H16 / Stanier 337) (Ralstonia eutropha).